We begin with the raw amino-acid sequence, 280 residues long: Transcription factor HES-1 (280 aa).

Positions 1 to 44 (MPADIMEKNSSSPVAATPASVNTTPDKPKTASEHRKSSKPIMEK) are disordered. The span at 10-21 (SSSPVAATPASV) shows a compositional bias: low complexity. Residues 26–35 (DKPKTASEHR) are compositionally biased toward basic and acidic residues. One can recognise a bHLH domain in the interval 34–91 (HRKSSKPIMEKRRRARINESLSQLKTLILDALKKDSSRHSKLEKADILEMTVKHLRNL). One can recognise an Orange domain in the interval 110-143 (YRAGFSECMNEVTRFLSTCEGVNTEVRTRLLGHL). Disordered regions lie at residues 157 to 200 (GQPH…PPGG) and 254 to 280 (TSVGPNAVSPSSGPSLTADSMWRPWRN). Composition is skewed to pro residues over residues 164-174 (QAPPPPPPGPG) and 181-200 (FAPPPPLVPIPGGAAPPPGG). The segment covering 254–271 (TSVGPNAVSPSSGPSLTA) has biased composition (polar residues). The WRPW motif motif lies at 275 to 278 (WRPW).

Transcription repression requires formation of a complex with a corepressor protein of the Groucho/TLE family. Interacts (via WPRW motif) with TLE1, and more weakly with TLE2. Interacts with HES6. Interacts with SIRT1. Interacts with an FA complex, composed of FANCA, FANCF, FANCG and FANCL, but not of FANCC, nor FANCE. In terms of processing, (Microbial infection) Ubiquitinated via human cytomegalovirus/HCMV protein IE1 that assembles a HES1 ubiquitination complex; leading to HES1 proteasomal degradation.

The protein localises to the nucleus. Its function is as follows. Transcriptional repressor of genes that require a bHLH protein for their transcription. May act as a negative regulator of myogenesis by inhibiting the functions of MYOD1 and ASH1. Binds DNA on N-box motifs: 5'-CACNAG-3' with high affinity and on E-box motifs: 5'-CANNTG-3' with low affinity. May play a role in a functional FA core complex response to DNA cross-link damage, being required for the stability and nuclear localization of FA core complex proteins, as well as for FANCD2 monoubiquitination in response to DNA damage. In Homo sapiens (Human), this protein is Transcription factor HES-1 (HES1).